A 359-amino-acid polypeptide reads, in one-letter code: Heat-inducible transcription repressor HrcA (359 aa).

This sequence belongs to the HrcA family.

Negative regulator of class I heat shock genes (grpE-dnaK-dnaJ and groELS operons). Prevents heat-shock induction of these operons. The polypeptide is Heat-inducible transcription repressor HrcA (Rhizobium meliloti (strain 1021) (Ensifer meliloti)).